Reading from the N-terminus, the 232-residue chain is Orotate phosphoribosyltransferase (232 aa).

5-phospho-alpha-D-ribose 1-diphosphate contacts are provided by residues arginine 107, lysine 108, lysine 111, and glutamate 133–serine 141. Orotate is bound at residue threonine 137.

It belongs to the purine/pyrimidine phosphoribosyltransferase family. PyrE subfamily. Homodimer. It depends on Mg(2+) as a cofactor.

The catalysed reaction is orotidine 5'-phosphate + diphosphate = orotate + 5-phospho-alpha-D-ribose 1-diphosphate. The protein operates within pyrimidine metabolism; UMP biosynthesis via de novo pathway; UMP from orotate: step 1/2. Functionally, catalyzes the transfer of a ribosyl phosphate group from 5-phosphoribose 1-diphosphate to orotate, leading to the formation of orotidine monophosphate (OMP). The sequence is that of Orotate phosphoribosyltransferase from Cereibacter sphaeroides (strain ATCC 17029 / ATH 2.4.9) (Rhodobacter sphaeroides).